We begin with the raw amino-acid sequence, 124 residues long: MAETSTSQSAAPDTGTYAIVEASGQQFWLQPNRYYDLDRLQADVDATVTLDNVLLVKDATGTTLGKPYVKDASVELKVMAHRRGPKVIVYKMRPKKKTRRKNGHRQELTRVMVQSISVGGKSIS.

The protein belongs to the bacterial ribosomal protein bL21 family. Part of the 50S ribosomal subunit. Contacts protein L20.

In terms of biological role, this protein binds to 23S rRNA in the presence of protein L20. This is Large ribosomal subunit protein bL21 from Synechococcus sp. (strain WH7803).